The following is a 614-amino-acid chain: DNA mismatch repair protein MutL (614 aa).

The protein belongs to the DNA mismatch repair MutL/HexB family.

Its function is as follows. This protein is involved in the repair of mismatches in DNA. It is required for dam-dependent methyl-directed DNA mismatch repair. May act as a 'molecular matchmaker', a protein that promotes the formation of a stable complex between two or more DNA-binding proteins in an ATP-dependent manner without itself being part of a final effector complex. In Thermoanaerobacter pseudethanolicus (strain ATCC 33223 / 39E) (Clostridium thermohydrosulfuricum), this protein is DNA mismatch repair protein MutL.